The following is a 135-amino-acid chain: UPF0355 protein SH2586 (135 aa).

Residues 105 to 135 are disordered; that stretch reads NSSHDEVEENNSAYEEIDITHYANESKGPKS.

Belongs to the UPF0355 family.

The polypeptide is UPF0355 protein SH2586 (Staphylococcus haemolyticus (strain JCSC1435)).